Here is a 53-residue protein sequence, read N- to C-terminus: Lantibiotic mutacin-2 (53 aa).

Positions 1–26 are excised as a propeptide; it reads MNKLNSNAVVSLNEVSDSELDTILGG. The beta-methyllanthionine (Thr-Cys) cross-link spans 36-41; the sequence is TVSYEC. Cross-links (lanthionine (Ser-Cys)) lie at residues 38-52 and 45-53; these read SYECRMNSWQHVFTC and SWQHVFTCC. 2,3-didehydrobutyrine is present on T51.

Maturation of lantibiotics involves the enzymatic conversion of Thr, and Ser into dehydrated AA and the formation of thioether bonds with cysteine. This is followed by membrane translocation and cleavage of the modified precursor. In terms of processing, it is not established whether the 2,3-didehydrobutyrine is the E- or Z-isomer.

In terms of biological role, lanthionine-containing peptide antibiotic (lantibiotic) active on Gram-positive bacteria including M.luteus, S.aureus, Streptococcus, P.micros, P.acidilactici, C.sporogenes, C.diphtheriae, A.viscosus, G.vaginalis, P.acnes, L.monocytogenes and M.smegmatis, and Gram-negative bacteria including C.jejuni, H.pylori and N.gonorrhoeae. Transiently and partially depolarizes the transmembrane electrical potential and pH gradient of susceptible cells, inhibits the uptake of amino acids and depletes the intracellular ATP pool. This is Lantibiotic mutacin-2 from Streptococcus mutans.